The chain runs to 315 residues: 4-hydroxy-3-methylbut-2-enyl diphosphate reductase (315 aa).

Residue Cys-12 coordinates [4Fe-4S] cluster. (2E)-4-hydroxy-3-methylbut-2-enyl diphosphate-binding residues include His-43 and His-81. Dimethylallyl diphosphate is bound by residues His-43 and His-81. Isopentenyl diphosphate contacts are provided by His-43 and His-81. Position 103 (Cys-103) interacts with [4Fe-4S] cluster. His-131 lines the (2E)-4-hydroxy-3-methylbut-2-enyl diphosphate pocket. His-131 serves as a coordination point for dimethylallyl diphosphate. Isopentenyl diphosphate is bound at residue His-131. Catalysis depends on Glu-133, which acts as the Proton donor. Position 170 (Thr-170) interacts with (2E)-4-hydroxy-3-methylbut-2-enyl diphosphate. Cys-198 is a binding site for [4Fe-4S] cluster. (2E)-4-hydroxy-3-methylbut-2-enyl diphosphate contacts are provided by Ser-226, Asn-228, and Ser-271. Dimethylallyl diphosphate is bound by residues Ser-226, Asn-228, and Ser-271. Residues Ser-226, Asn-228, and Ser-271 each contribute to the isopentenyl diphosphate site.

Belongs to the IspH family. Requires [4Fe-4S] cluster as cofactor.

It catalyses the reaction isopentenyl diphosphate + 2 oxidized [2Fe-2S]-[ferredoxin] + H2O = (2E)-4-hydroxy-3-methylbut-2-enyl diphosphate + 2 reduced [2Fe-2S]-[ferredoxin] + 2 H(+). The enzyme catalyses dimethylallyl diphosphate + 2 oxidized [2Fe-2S]-[ferredoxin] + H2O = (2E)-4-hydroxy-3-methylbut-2-enyl diphosphate + 2 reduced [2Fe-2S]-[ferredoxin] + 2 H(+). It participates in isoprenoid biosynthesis; dimethylallyl diphosphate biosynthesis; dimethylallyl diphosphate from (2E)-4-hydroxy-3-methylbutenyl diphosphate: step 1/1. The protein operates within isoprenoid biosynthesis; isopentenyl diphosphate biosynthesis via DXP pathway; isopentenyl diphosphate from 1-deoxy-D-xylulose 5-phosphate: step 6/6. Functionally, catalyzes the conversion of 1-hydroxy-2-methyl-2-(E)-butenyl 4-diphosphate (HMBPP) into a mixture of isopentenyl diphosphate (IPP) and dimethylallyl diphosphate (DMAPP). Acts in the terminal step of the DOXP/MEP pathway for isoprenoid precursor biosynthesis. This is 4-hydroxy-3-methylbut-2-enyl diphosphate reductase from Anoxybacillus flavithermus (strain DSM 21510 / WK1).